Consider the following 278-residue polypeptide: Chitosanase (278 aa).

The first 40 residues, 1–40 (MHSQHRTARIALAVVLTAIPASLATAGVGYASTQASTAVK), serve as a signal peptide directing secretion. E62 (proton donor) is an active-site residue. Residue D80 is the Nucleophile of the active site.

It belongs to the glycosyl hydrolase 46 family.

It localises to the secreted. It catalyses the reaction Endohydrolysis of beta-(1-&gt;4)-linkages between D-glucosamine residues in a partly acetylated chitosan.. Functionally, aids in the defense against invading fungal pathogens by degrading their cell wall chitosan. In Streptomyces sp. (strain N174), this protein is Chitosanase (csn).